Consider the following 449-residue polypeptide: GTPase Der (449 aa).

2 consecutive EngA-type G domains span residues 2–169 (FTVA…QLPP) and 180–355 (VRFC…EQLT). GTP-binding positions include 8–15 (GRPNVGKS), 55–59 (DTGGL), 118–121 (NKSE), 186–193 (GKPNVGKS), 233–237 (DTAGI), and 298–301 (NKWD). The region spanning 356–440 (KKISTSLLND…PITLYFKSKN (85 aa)) is the KH-like domain.

Belongs to the TRAFAC class TrmE-Era-EngA-EngB-Septin-like GTPase superfamily. EngA (Der) GTPase family. In terms of assembly, associates with the 50S ribosomal subunit.

GTPase that plays an essential role in the late steps of ribosome biogenesis. The chain is GTPase Der from Mycoplasma pneumoniae (strain ATCC 29342 / M129 / Subtype 1) (Mycoplasmoides pneumoniae).